Here is a 495-residue protein sequence, read N- to C-terminus: Glutamate--tRNA ligase (495 aa).

Positions 12 to 22 match the 'HIGH' region motif; sequence PSPTGHLHIGN. The 'KMSKS' region motif lies at 259–263; it reads KLSKR. Lys262 contacts ATP.

Belongs to the class-I aminoacyl-tRNA synthetase family. Glutamate--tRNA ligase type 1 subfamily. As to quaternary structure, monomer.

Its subcellular location is the cytoplasm. The catalysed reaction is tRNA(Glu) + L-glutamate + ATP = L-glutamyl-tRNA(Glu) + AMP + diphosphate. Its function is as follows. Catalyzes the attachment of glutamate to tRNA(Glu) in a two-step reaction: glutamate is first activated by ATP to form Glu-AMP and then transferred to the acceptor end of tRNA(Glu). This chain is Glutamate--tRNA ligase, found in Latilactobacillus sakei subsp. sakei (strain 23K) (Lactobacillus sakei subsp. sakei).